The chain runs to 423 residues: Probable M18 family aminopeptidase 2 (423 aa).

The Zn(2+) site is built by His-84, His-157, and His-397.

The protein belongs to the peptidase M18 family. Zn(2+) is required as a cofactor.

This chain is Probable M18 family aminopeptidase 2 (apeB), found in Borreliella burgdorferi (strain ATCC 35210 / DSM 4680 / CIP 102532 / B31) (Borrelia burgdorferi).